The sequence spans 1400 residues: RNA polymerase II-associated protein 1 (1400 aa).

Disordered regions lie at residues 35 to 54 (KGSR…QDHR), 60 to 95 (DSLP…EERL), 161 to 215 (VSDN…GKGL), and 269 to 310 (REQT…DKLE). Composition is skewed to basic and acidic residues over residues 39 to 54 (RRGD…QDHR) and 85 to 95 (LPHDEDPEERL). Over residues 269-282 (REQTETKATKEQNP) the composition is skewed to basic and acidic residues. Residue Thr-329 is modified to Phosphothreonine. The tract at residues 504-539 (PSHDDKEDEDEDEELTKEKVNRKTPEEGSRPPPDLA) is disordered. Over residues 509-518 (KEDEDEDEEL) the composition is skewed to acidic residues. The segment covering 519–539 (TKEKVNRKTPEEGSRPPPDLA) has biased composition (basic and acidic residues).

Belongs to the RPAP1 family. In terms of assembly, part of an RNA polymerase II complex that contains POLR2A, POLR2B, POLR2C, POLR2D, POLR2E, POLR2F, POLR2G, POLR2H, POLR2I, POLR2J, POLR2K, POLR2L, RPAP1, FCP1 plus the general transcription factors TFIIB and TFIIF.

It is found in the nucleus. Its function is as follows. Forms an interface between the RNA polymerase II enzyme and chaperone/scaffolding protein, suggesting that it is required to connect RNA polymerase II to regulators of protein complex formation. Required for interaction of the RNA polymerase II complex with acetylated histone H3. The polypeptide is RNA polymerase II-associated protein 1 (Rpap1) (Rattus norvegicus (Rat)).